Here is a 476-residue protein sequence, read N- to C-terminus: MAIKFLEVIKPFCAVLPEIQKPERRIQFKEKVLWTAITLFIFLVCCQIPLFGIMSSDSADPFYWMRVIMASNRGTLMELGISPIVTSGLIMQLLAGAKIIEVGDTPKDRALFNGAQKLFGMIITIGQAVVYVMTGMYGDPSEMGAGICLLIIIQLFVAGLIVLLLDELLQKGYGLGSGISLFIATNICETIVWKAFSPTTVNTGRGTEFEGAIIALFHLLATRTDKVRALREAFYRQNLPNLMNLIATIFVFAVVIYFQGFRVDLPIKSARYRGQYNTYPIKLFYTSNIPIILQSALVSNLYVISQMLSTRFSGNFLVNLLGTWSDTSTGGPARAYPVGGLCYYLSPPESFGTVLEDPIHAIIYIIFMLGSCAFFSKTWIEVSGSSAKDVAKQLKEQQMVMRGHRETSMVHELNRYIPTAAAFGGLCIGGLSVMADFLGAIGSGTGILLAVTIIYQYFEIFVKEQSEVGSVGALLF.

Over 2–33 (AIKFLEVIKPFCAVLPEIQKPERRIQFKEKVL) the chain is Cytoplasmic. A helical transmembrane segment spans residues 34–53 (WTAITLFIFLVCCQIPLFGI). Over 54–76 (MSSDSADPFYWMRVIMASNRGTL) the chain is Lumenal. Residues 77-96 (MELGISPIVTSGLIMQLLAG) traverse the membrane as a helical segment. Residues 97-117 (AKIIEVGDTPKDRALFNGAQK) lie on the Cytoplasmic side of the membrane. The helical transmembrane segment at 118 to 138 (LFGMIITIGQAVVYVMTGMYG) threads the bilayer. The Lumenal portion of the chain corresponds to 139–144 (DPSEMG). Residues 145–165 (AGICLLIIIQLFVAGLIVLLL) traverse the membrane as a helical segment. The Cytoplasmic portion of the chain corresponds to 166 to 172 (DELLQKG). The chain crosses the membrane as a helical span at residues 173-193 (YGLGSGISLFIATNICETIVW). The Lumenal segment spans residues 194 to 240 (KAFSPTTVNTGRGTEFEGAIIALFHLLATRTDKVRALREAFYRQNLP). Residues 241 to 261 (NLMNLIATIFVFAVVIYFQGF) form a helical membrane-spanning segment. The Cytoplasmic portion of the chain corresponds to 262–288 (RVDLPIKSARYRGQYNTYPIKLFYTSN). The helical transmembrane segment at 289-309 (IPIILQSALVSNLYVISQMLS) threads the bilayer. Topologically, residues 310–354 (TRFSGNFLVNLLGTWSDTSTGGPARAYPVGGLCYYLSPPESFGTV) are lumenal. The helical transmembrane segment at 355-375 (LEDPIHAIIYIIFMLGSCAFF) threads the bilayer. Topologically, residues 376 to 420 (SKTWIEVSGSSAKDVAKQLKEQQMVMRGHRETSMVHELNRYIPTA) are cytoplasmic. Residues 421 to 441 (AAFGGLCIGGLSVMADFLGAI) traverse the membrane as a helical segment. Over 442-445 (GSGT) the chain is Lumenal. A helical membrane pass occupies residues 446–462 (GILLAVTIIYQYFEIFV). Residues 463-476 (KEQSEVGSVGALLF) lie on the Cytoplasmic side of the membrane.

Belongs to the SecY/SEC61-alpha family. As to quaternary structure, the SEC61 channel-forming translocon complex consists of channel-forming core components SEC61A1, SEC61B and SEC61G and different auxiliary components such as SEC62 and SEC63.

It localises to the endoplasmic reticulum membrane. Component of SEC61 channel-forming translocon complex that mediates transport of signal peptide-containing precursor polypeptides across the endoplasmic reticulum (ER). Forms a ribosome receptor and a gated pore in the ER membrane, both functions required for cotranslational translocation of nascent polypeptides. The protein is Protein transport protein Sec61 subunit alpha-like 2 (sec61al2) of Danio rerio (Zebrafish).